Here is a 389-residue protein sequence, read N- to C-terminus: 8-amino-7-oxononanoate synthase (389 aa).

R31 is a substrate binding site. Position 109-110 (109-110) interacts with pyridoxal 5'-phosphate; the sequence is GY. H134 is a substrate binding site. Residues S180, 205-208, and 236-239 each bind pyridoxal 5'-phosphate; these read DEAH and TLSK. K239 carries the N6-(pyridoxal phosphate)lysine modification. Position 349 (T349) interacts with substrate.

The protein belongs to the class-II pyridoxal-phosphate-dependent aminotransferase family. BioF subfamily. As to quaternary structure, homodimer. Pyridoxal 5'-phosphate serves as cofactor.

The catalysed reaction is 6-carboxyhexanoyl-[ACP] + L-alanine + H(+) = (8S)-8-amino-7-oxononanoate + holo-[ACP] + CO2. Its pathway is cofactor biosynthesis; biotin biosynthesis. Its function is as follows. Catalyzes the decarboxylative condensation of pimeloyl-[acyl-carrier protein] and L-alanine to produce 8-amino-7-oxononanoate (AON), [acyl-carrier protein], and carbon dioxide. This chain is 8-amino-7-oxononanoate synthase, found in Mycobacterium ulcerans (strain Agy99).